Here is a 199-residue protein sequence, read N- to C-terminus: Elongation factor Ts (199 aa).

The segment at 82–85 (TDFV) is involved in Mg(2+) ion dislocation from EF-Tu.

It belongs to the EF-Ts family.

The protein localises to the cytoplasm. Its function is as follows. Associates with the EF-Tu.GDP complex and induces the exchange of GDP to GTP. It remains bound to the aminoacyl-tRNA.EF-Tu.GTP complex up to the GTP hydrolysis stage on the ribosome. The chain is Elongation factor Ts from Leptospira borgpetersenii serovar Hardjo-bovis (strain JB197).